The sequence spans 245 residues: Orotidine 5'-phosphate decarboxylase (245 aa).

Substrate-binding positions include Asp-22, Lys-44, 71–80 (DLKFHDIPNT), Thr-131, Arg-192, Gln-201, Gly-221, and Arg-222. Lys-73 (proton donor) is an active-site residue.

The protein belongs to the OMP decarboxylase family. Type 1 subfamily. As to quaternary structure, homodimer.

The catalysed reaction is orotidine 5'-phosphate + H(+) = UMP + CO2. It participates in pyrimidine metabolism; UMP biosynthesis via de novo pathway; UMP from orotate: step 2/2. In terms of biological role, catalyzes the decarboxylation of orotidine 5'-monophosphate (OMP) to uridine 5'-monophosphate (UMP). The polypeptide is Orotidine 5'-phosphate decarboxylase (Escherichia coli O139:H28 (strain E24377A / ETEC)).